We begin with the raw amino-acid sequence, 153 residues long: Putative tRNA (cytidine(34)-2'-O)-methyltransferase (153 aa).

S-adenosyl-L-methionine-binding residues include G102, I122, and S131.

It belongs to the class IV-like SAM-binding methyltransferase superfamily. RNA methyltransferase TrmH family. TrmL subfamily.

Its subcellular location is the cytoplasm. The enzyme catalyses cytidine(34) in tRNA + S-adenosyl-L-methionine = 2'-O-methylcytidine(34) in tRNA + S-adenosyl-L-homocysteine + H(+). The catalysed reaction is 5-carboxymethylaminomethyluridine(34) in tRNA(Leu) + S-adenosyl-L-methionine = 5-carboxymethylaminomethyl-2'-O-methyluridine(34) in tRNA(Leu) + S-adenosyl-L-homocysteine + H(+). In terms of biological role, could methylate the ribose at the nucleotide 34 wobble position in tRNA. In Synechocystis sp. (strain ATCC 27184 / PCC 6803 / Kazusa), this protein is Putative tRNA (cytidine(34)-2'-O)-methyltransferase.